Reading from the N-terminus, the 383-residue chain is MAVGSTTTRAGEAALERLRQWPGEHRVAIGLSGGVDSSLTAALLVEAGWEVEGLTLWLMSGKGACCAEGLVDAAGICEQLGIPHHVVDMRETFQQEIVQRLVDGYRDGITPLPCSQCNRSVKFGPMLDWALQERKLPRIATGHYARIRHGGDRGRHQLLRGLDTRKDQSYFLYDLPQEVLGRIVFPLGELTKPDTRLEAARHGLRTAEKPESQDLCLADHHGSMRAFLDAYLPPRQGEIVLADGTVVGEHDGIEHFTVGQRKGLGVAWGEPLHVIRLDAAMNRVVVAPRAEAGRDSCVVGAVNWVSIDPIEAPRTVEVQVRYRSTPVRAELSPLPAIEADQQRERPHRCRLSFEEEQFSITPGQAAVFYDGETVLGGGLIQRE.

ATP is bound by residues 30 to 37 (GLSGGVDS) and Leu56. Residue Cys117 is the Nucleophile of the active site. The cysteines at positions 117 and 216 are disulfide-linked. Gly142 contributes to the ATP binding site. The segment at 166–168 (KDQ) is interaction with tRNA. The active-site Cysteine persulfide intermediate is the Cys216. The interaction with tRNA stretch occupies residues 321–322 (RY).

Belongs to the MnmA/TRMU family.

It localises to the cytoplasm. It catalyses the reaction S-sulfanyl-L-cysteinyl-[protein] + uridine(34) in tRNA + AH2 + ATP = 2-thiouridine(34) in tRNA + L-cysteinyl-[protein] + A + AMP + diphosphate + H(+). Functionally, catalyzes the 2-thiolation of uridine at the wobble position (U34) of tRNA, leading to the formation of s(2)U34. The polypeptide is tRNA-specific 2-thiouridylase MnmA (Synechococcus sp. (strain CC9605)).